The chain runs to 306 residues: Dermonecrotic toxin LiSicTox-alphaIA2bi (306 aa).

Residues 1–18 form the signal peptide; the sequence is MLPYIALILVCWSVLSQA. A propeptide spanning residues 19 to 26 is cleaved from the precursor; the sequence is AQTDVEGR. H38 is a catalytic residue. Positions 58 and 60 each coordinate Mg(2+). The active-site Nucleophile is H74. Cystine bridges form between C78-C84 and C80-C223. D118 contacts Mg(2+). N-linked (GlcNAc...) asparagine glycosylation is present at N283.

It belongs to the arthropod phospholipase D family. Class II subfamily. It depends on Mg(2+) as a cofactor. Expressed by the venom gland.

It is found in the secreted. The catalysed reaction is an N-(acyl)-sphingosylphosphocholine = an N-(acyl)-sphingosyl-1,3-cyclic phosphate + choline. The enzyme catalyses an N-(acyl)-sphingosylphosphoethanolamine = an N-(acyl)-sphingosyl-1,3-cyclic phosphate + ethanolamine. It carries out the reaction a 1-acyl-sn-glycero-3-phosphocholine = a 1-acyl-sn-glycero-2,3-cyclic phosphate + choline. It catalyses the reaction a 1-acyl-sn-glycero-3-phosphoethanolamine = a 1-acyl-sn-glycero-2,3-cyclic phosphate + ethanolamine. Functionally, dermonecrotic toxins cleave the phosphodiester linkage between the phosphate and headgroup of certain phospholipids (sphingolipid and lysolipid substrates), forming an alcohol (often choline) and a cyclic phosphate. This toxin acts on sphingomyelin (SM). It may also act on ceramide phosphoethanolamine (CPE), lysophosphatidylcholine (LPC) and lysophosphatidylethanolamine (LPE), but not on lysophosphatidylserine (LPS), and lysophosphatidylglycerol (LPG). It acts by transphosphatidylation, releasing exclusively cyclic phosphate products as second products. Induces dermonecrosis, hemolysis, increased vascular permeability, edema, inflammatory response, and platelet aggregation. This Loxosceles intermedia (Brown spider) protein is Dermonecrotic toxin LiSicTox-alphaIA2bi.